Reading from the N-terminus, the 438-residue chain is Malic acid transport protein (438 aa).

Transmembrane regions (helical) follow at residues 37 to 57 (SWFA…SFPF), 65 to 85 (IGKI…SCML), 106 to 126 (LFIA…AIYA), 140 to 160 (ILYY…FFTI), 172 to 192 (SPAW…AGAV), 205 to 225 (VIFG…LFAV), 242 to 262 (PGMF…INIA), 288 to 308 (FMAI…MVSF), 321 to 341 (ACGW…TIEI), and 353 to 373 (FGHI…YLMV). Residues 390 to 438 (AHPPPKPNTGVLNPTFPPEKAPASLEKVDTHVTSTGGESDPPSSEHESV) form a disordered region. Phosphoserine occurs at positions 413, 423, 428, 432, 433, and 437.

The protein belongs to the tellurite-resistance/dicarboxylate transporter (TDT) family.

The protein localises to the membrane. Functionally, permease for malate and other C4 dicarboxylic acids. The polypeptide is Malic acid transport protein (mae1) (Schizosaccharomyces pombe (strain 972 / ATCC 24843) (Fission yeast)).